Reading from the N-terminus, the 234-residue chain is MLFSPPLQRATLIQRYKRFLADVITPDGTTLTLHCPNTGAMTGCATPGDTVWYSTSENTKRKYPHTWELTETQSGAFICVNTLRANQLTKEAIQENRLPALAGYNILNSEVKYGAERSRIDFMLQADFRPDCYIEVKSVTLAEKENGYFPDAITERGQKHLRELMGVAAAGHRAVVVFAVLHSAITRFSPARHIDIKYAQLLSEAQNKGVEVLAYKAELSATKMELNEPVPITL.

The segment at residues 201–220 (LLSEAQNKGVEVLAYKAELS) is a DNA-binding region (H-T-H motif).

Belongs to the SfsA family.

Functionally, binds to DNA non-specifically. Could be a regulatory factor involved in maltose metabolism. The sequence is that of Sugar fermentation stimulation protein A from Salmonella typhi.